The primary structure comprises 295 residues: sn-glycerol-3-phosphate transport system permease protein UgpA (295 aa).

Residues 1-11 (MSSFRPVFRSR) lie on the Cytoplasmic side of the membrane. Residues 12 to 32 (WLPYLLVAPQLVITVIFFIWP) form a helical membrane-spanning segment. The Periplasmic segment spans residues 33 to 80 (AGEALWYSLQSVDPFGFSSQFVGLENFVALFHDSYYLDAFWTTIKFSA). In terms of domain architecture, ABC transmembrane type-1 spans 76 to 284 (IKFSALVTFS…FLVIILTVVQ (209 aa)). Residues 81–101 (LVTFSGLLVSLFFAALVDYVV) traverse the membrane as a helical segment. At 102 to 109 (RGSRFYQT) the chain is on the cytoplasmic side. The chain crosses the membrane as a helical span at residues 110–130 (LMLLPYAVAPAVAAVLWIFLF). Residues 131–157 (NPGRGLITHFLGEFGYDWNHAQNSGQA) are Periplasmic-facing. A helical transmembrane segment spans residues 158-178 (MFLVVFASVWKQISYNFLFFF). Topologically, residues 179-207 (AALQSIPRSLVEAAAIDGAGPIRRFFRLS) are cytoplasmic. The chain crosses the membrane as a helical span at residues 208–228 (LPLIAPVSFFLLVVNLVYAFF). At 229 to 262 (DTFPVIDAATAGGPVQATTTLIYKIYREGFTGLD) the chain is on the periplasmic side. Residues 263–283 (LSASAAQSVVLMFLVIILTVV) form a helical membrane-spanning segment. Residues 284 to 295 (QFRYVESKVRYQ) lie on the Cytoplasmic side of the membrane.

The protein belongs to the binding-protein-dependent transport system permease family. UgpAE subfamily. The complex is composed of two ATP-binding proteins (UgpC), two transmembrane proteins (UgpA and UgpE) and a solute-binding protein (UgpB).

The protein localises to the cell inner membrane. Part of the ABC transporter complex UgpBAEC involved in sn-glycerol-3-phosphate (G3P) import. Probably responsible for the translocation of the substrate across the membrane. The chain is sn-glycerol-3-phosphate transport system permease protein UgpA (ugpA) from Salmonella choleraesuis (strain SC-B67).